The primary structure comprises 291 residues: Diaminopimelate epimerase (291 aa).

The substrate site is built by N11 and N78. C87 functions as the Proton donor in the catalytic mechanism. Residues G88–N89, N166, N200, and E218–R219 each bind substrate. C227 functions as the Proton acceptor in the catalytic mechanism. Residue G228–T229 participates in substrate binding.

It belongs to the diaminopimelate epimerase family. As to quaternary structure, homodimer.

It is found in the cytoplasm. It carries out the reaction (2S,6S)-2,6-diaminopimelate = meso-2,6-diaminopimelate. The protein operates within amino-acid biosynthesis; L-lysine biosynthesis via DAP pathway; DL-2,6-diaminopimelate from LL-2,6-diaminopimelate: step 1/1. Its function is as follows. Catalyzes the stereoinversion of LL-2,6-diaminopimelate (L,L-DAP) to meso-diaminopimelate (meso-DAP), a precursor of L-lysine and an essential component of the bacterial peptidoglycan. The sequence is that of Diaminopimelate epimerase from Mycolicibacterium smegmatis (strain ATCC 700084 / mc(2)155) (Mycobacterium smegmatis).